The following is a 291-amino-acid chain: Ribosomal RNA small subunit methyltransferase A (291 aa).

Residues Asn-29, Leu-31, Gly-56, Glu-77, Asp-102, and Asn-127 each coordinate S-adenosyl-L-methionine.

The protein belongs to the class I-like SAM-binding methyltransferase superfamily. rRNA adenine N(6)-methyltransferase family. RsmA subfamily.

It is found in the cytoplasm. The enzyme catalyses adenosine(1518)/adenosine(1519) in 16S rRNA + 4 S-adenosyl-L-methionine = N(6)-dimethyladenosine(1518)/N(6)-dimethyladenosine(1519) in 16S rRNA + 4 S-adenosyl-L-homocysteine + 4 H(+). Specifically dimethylates two adjacent adenosines (A1518 and A1519) in the loop of a conserved hairpin near the 3'-end of 16S rRNA in the 30S particle. May play a critical role in biogenesis of 30S subunits. In Geobacillus sp. (strain WCH70), this protein is Ribosomal RNA small subunit methyltransferase A.